A 934-amino-acid chain; its full sequence is Bifunctional uridylyltransferase/uridylyl-removing enzyme (934 aa).

The tract at residues 1 to 379 (MSAHDLKLEE…TFSRRKRKLS (379 aa)) is uridylyltransferase. The uridylyl-removing stretch occupies residues 380 to 736 (ADGDFVSENH…AKPHTFEAVT (357 aa)). The HD domain maps to 496–613 (VDEHLLRCIA…IDFADTVQTM (118 aa)). ACT domains follow at residues 737-819 (EITV…VLAK) and 848-931 (VIEV…RSSQ).

The protein belongs to the GlnD family. Requires Mg(2+) as cofactor.

It catalyses the reaction [protein-PII]-L-tyrosine + UTP = [protein-PII]-uridylyl-L-tyrosine + diphosphate. The catalysed reaction is [protein-PII]-uridylyl-L-tyrosine + H2O = [protein-PII]-L-tyrosine + UMP + H(+). With respect to regulation, uridylyltransferase (UTase) activity is inhibited by glutamine, while glutamine activates uridylyl-removing (UR) activity. Its function is as follows. Modifies, by uridylylation and deuridylylation, the PII regulatory proteins (GlnB and homologs), in response to the nitrogen status of the cell that GlnD senses through the glutamine level. Under low glutamine levels, catalyzes the conversion of the PII proteins and UTP to PII-UMP and PPi, while under higher glutamine levels, GlnD hydrolyzes PII-UMP to PII and UMP (deuridylylation). Thus, controls uridylylation state and activity of the PII proteins, and plays an important role in the regulation of nitrogen assimilation and metabolism. This is Bifunctional uridylyltransferase/uridylyl-removing enzyme from Brucella anthropi (strain ATCC 49188 / DSM 6882 / CCUG 24695 / JCM 21032 / LMG 3331 / NBRC 15819 / NCTC 12168 / Alc 37) (Ochrobactrum anthropi).